Consider the following 379-residue polypeptide: (R)-2-hydroxyglutaryl-CoA dehydratase, subunit beta (379 aa).

Belongs to the FldB/FldC dehydratase alpha/beta subunit family. The (R)-2-hydroxyglutaryl-CoA dehydratase enzyme system is a heterodimer composed of an alpha subunit (HgdA) and a beta subunit (HgdB). Requires [4Fe-4S] cluster as cofactor. The cofactor is FMN. It depends on Mg(2+) as a cofactor.

It localises to the cytoplasm. The catalysed reaction is (R)-2-hydroxyglutaryl-CoA = (2E)-glutaconyl-CoA + H2O. It functions in the pathway amino-acid degradation; L-glutamate degradation via hydroxyglutarate pathway; crotonoyl-CoA from L-glutamate: step 4/5. Its activity is regulated as follows. Activated by the HgdC. Reversibly inactivated by oxidants such as 2-nitrophenol, 3-nitrophenol, 4-nitrophenol, 4-nitrobenzoate, carbonyl cyanide 4-(trifluoromethoxy)phenylhydrazone (FCCP) and chloramphenicol. Irreversibly inactivated by oxidants such as hydroxylamine and nitrite. In terms of biological role, involved in the fermentation of L-glutamate via the hydroxyglutarate pathway. Catalyzes the reversible syn-elimination of water from (R)-2-hydroxyglutaryl-CoA to yield (E)-glutaconyl-CoA. The dehydration mechanism involves a transient one electron reduction of the thioester from (R)-2-hydroxyglutaryl-CoA, generating a ketyl radical. Prior to (E)-glutaconyl-CoA formation, the ketyl radical is subsequently reoxidized by electron transfer back to the HgdA-HgdB complex (CompD) to avoid change in oxidation state of the substrate. The appropriate redox state of dehydratase HgdA-HgdB complex (CompD) is maintained by HgdC (CompA) via hydrolysis of ATP and ATP-dependent electron transfer. Since the electron is recycled, the dehydratase is able to perform several turnovers with only catalytic amounts of ATP and substoichiometric amounts of HgdC (CompA). In Acidaminococcus fermentans (strain ATCC 25085 / DSM 20731 / CCUG 9996 / CIP 106432 / VR4), this protein is (R)-2-hydroxyglutaryl-CoA dehydratase, subunit beta.